Here is a 317-residue protein sequence, read N- to C-terminus: Glutathione synthetase (317 aa).

The ATP-grasp domain maps to K126–A311. A152–G208 provides a ligand contact to ATP. Positions 282 and 284 each coordinate Mg(2+).

It belongs to the prokaryotic GSH synthase family. Requires Mg(2+) as cofactor. The cofactor is Mn(2+).

It catalyses the reaction gamma-L-glutamyl-L-cysteine + glycine + ATP = glutathione + ADP + phosphate + H(+). Its pathway is sulfur metabolism; glutathione biosynthesis; glutathione from L-cysteine and L-glutamate: step 2/2. This is Glutathione synthetase from Pseudomonas aeruginosa (strain ATCC 15692 / DSM 22644 / CIP 104116 / JCM 14847 / LMG 12228 / 1C / PRS 101 / PAO1).